Reading from the N-terminus, the 121-residue chain is Ribosome-binding factor A (121 aa).

This sequence belongs to the RbfA family. Monomer. Binds 30S ribosomal subunits, but not 50S ribosomal subunits or 70S ribosomes.

Its subcellular location is the cytoplasm. Functionally, one of several proteins that assist in the late maturation steps of the functional core of the 30S ribosomal subunit. Associates with free 30S ribosomal subunits (but not with 30S subunits that are part of 70S ribosomes or polysomes). Required for efficient processing of 16S rRNA. May interact with the 5'-terminal helix region of 16S rRNA. The sequence is that of Ribosome-binding factor A from Oenococcus oeni (strain ATCC BAA-331 / PSU-1).